A 107-amino-acid chain; its full sequence is Ig kappa chain V-VI region NQ6-8.3.1 (107 aa).

The tract at residues 1-23 (QIVLTQSPAIMSASPGQKVTMTC) is framework-1. Cysteine 23 and cysteine 87 are joined by a disulfide. A complementarity-determining-1 region spans residues 24 to 33 (SASSSVSYMH). The framework-2 stretch occupies residues 34–48 (WYQQKSGTSPKRWIY). The interval 49-55 (DTSKLAS) is complementarity-determining-2. The framework-3 stretch occupies residues 56–87 (GXPARFSGSGSATSYSLTITSMQAEDAATYYC). The tract at residues 88-96 (QQWSSNPLT) is complementarity-determining-3. Residues 97 to 106 (FGAGTKLELK) form a framework-4 region.

Functionally, anti-2-phenyl oxazolone (PHOX) Antibody. The chain is Ig kappa chain V-VI region NQ6-8.3.1 from Mus musculus (Mouse).